A 992-amino-acid polypeptide reads, in one-letter code: UPF0182 protein Mb3215c (992 aa).

7 helical membrane-spanning segments follow: residues 17–39 (RILI…LIDA), 59–81 (LATR…FGGL), 113–135 (LVGI…SYWA), 169–191 (LMLS…AHYI), 212–229 (LVSL…AYWL), 255–277 (VLPA…FSAI), and 284–306 (IPAI…WPLI). The segment at 906 to 938 (PTEAAVPPSPAANPPPPASGPQPPPVTAAPPVP) is disordered. A compositionally biased stretch (pro residues) spans 912–938 (PPSPAANPPPPASGPQPPPVTAAPPVP).

This sequence belongs to the UPF0182 family.

The protein localises to the cell membrane. This Mycobacterium bovis (strain ATCC BAA-935 / AF2122/97) protein is UPF0182 protein Mb3215c.